Consider the following 384-residue polypeptide: Cobalt-precorrin-5B C(1)-methyltransferase (384 aa).

Belongs to the CbiD family.

It catalyses the reaction Co-precorrin-5B + S-adenosyl-L-methionine = Co-precorrin-6A + S-adenosyl-L-homocysteine. The protein operates within cofactor biosynthesis; adenosylcobalamin biosynthesis; cob(II)yrinate a,c-diamide from sirohydrochlorin (anaerobic route): step 6/10. Catalyzes the methylation of C-1 in cobalt-precorrin-5B to form cobalt-precorrin-6A. The sequence is that of Cobalt-precorrin-5B C(1)-methyltransferase from Ruminiclostridium cellulolyticum (strain ATCC 35319 / DSM 5812 / JCM 6584 / H10) (Clostridium cellulolyticum).